We begin with the raw amino-acid sequence, 448 residues long: Protein giant (448 aa).

4 disordered regions span residues 23–47 (MHHH…LPVQ), 83–134 (QQHQ…ASPT), 238–259 (VEAT…RPFK), and 298–363 (IRSS…TSSS). Residues 30 to 47 (HHQQQPLHHLPHSQLPVQ) show a composition bias toward low complexity. Basic and acidic residues predominate over residues 100-112 (DLSRRCDSVETPR). Over residues 115–134 (PSPYQTSYSYGSGSPSASPT) the composition is skewed to low complexity. The span at 298-310 (IRSSNGGSRTVTN) shows a compositional bias: polar residues. The segment covering 318–333 (SRSGSVNEGSSSNNNS) has biased composition (low complexity). Residues 384–447 (DAAYYERRRK…AAFTSAKVTT (64 aa)) enclose the bZIP domain. Positions 390–406 (RRRKNNAAAKKSRDRRR) are basic motif. Residues 407–414 (IKEDEIAI) are leucine-zipper.

It belongs to the bZIP family. In terms of assembly, homodimer or heterodimer. In terms of processing, phosphorylated at multiple sites.

It is found in the nucleus. Functionally, represses the expression of both the krueppel and knirps segmentation gap genes. Binds, in vitro, to the krueppel regulatory elements CD1 and CD2. It is required in the early embryo for the development of portions of the head and abdomen. The polypeptide is Protein giant (gt) (Drosophila melanogaster (Fruit fly)).